Reading from the N-terminus, the 61-residue chain is Sperm protamine P1 (61 aa).

Residues 1–61 (MARYRHSRSR…RYSRRRRRRY (61 aa)) are disordered.

It belongs to the protamine P1 family. As to expression, testis.

The protein localises to the nucleus. The protein resides in the chromosome. Its function is as follows. Protamines substitute for histones in the chromatin of sperm during the haploid phase of spermatogenesis. They compact sperm DNA into a highly condensed, stable and inactive complex. The sequence is that of Sperm protamine P1 (PRM1) from Onychogalea fraenata (Bridled nail-tailed wallaby).